Reading from the N-terminus, the 590-residue chain is Aspartate--tRNA(Asp/Asn) ligase (590 aa).

Residue E173 participates in L-aspartate binding. The segment at 197 to 200 (QIFK) is aspartate. R219 provides a ligand contact to L-aspartate. ATP-binding positions include 219–221 (RDE) and Q228. H450 contacts L-aspartate. An ATP-binding site is contributed by E484. An L-aspartate-binding site is contributed by R491. 536–539 (GLDR) is an ATP binding site.

This sequence belongs to the class-II aminoacyl-tRNA synthetase family. Type 1 subfamily. In terms of assembly, homodimer.

The protein localises to the cytoplasm. The catalysed reaction is tRNA(Asx) + L-aspartate + ATP = L-aspartyl-tRNA(Asx) + AMP + diphosphate. Its function is as follows. Aspartyl-tRNA synthetase with relaxed tRNA specificity since it is able to aspartylate not only its cognate tRNA(Asp) but also tRNA(Asn). Reaction proceeds in two steps: L-aspartate is first activated by ATP to form Asp-AMP and then transferred to the acceptor end of tRNA(Asp/Asn). This is Aspartate--tRNA(Asp/Asn) ligase from Coxiella burnetii (strain RSA 493 / Nine Mile phase I).